Reading from the N-terminus, the 429-residue chain is Histidine--tRNA ligase (429 aa).

It belongs to the class-II aminoacyl-tRNA synthetase family. As to quaternary structure, homodimer.

The protein localises to the cytoplasm. It carries out the reaction tRNA(His) + L-histidine + ATP = L-histidyl-tRNA(His) + AMP + diphosphate + H(+). The chain is Histidine--tRNA ligase from Streptococcus pneumoniae (strain 70585).